Reading from the N-terminus, the 311-residue chain is T-cell immunomodulatory protein (311 aa).

Residues Asn-52, Asn-70, and Asn-181 are each glycosylated (N-linked (GlcNAc...) asparagine). A helical transmembrane segment spans residues 266 to 286 (VLLTAIALIGVCVFILAIIGI).

The protein belongs to the TIP family. As to quaternary structure, interacts with RUVBL1, RUVBL2 and alpha-tubulin.

It localises to the secreted. It is found in the cell membrane. Its function is as follows. Modulator of T-cell function. Has a protective effect in graft versus host disease model. This chain is T-cell immunomodulatory protein, found in Macaca fascicularis (Crab-eating macaque).